The sequence spans 246 residues: 4-hydroxy-tetrahydrodipicolinate reductase (246 aa).

NAD(+)-binding positions include 8 to 13 (GALGRM), Asp-34, 74 to 76 (GTT), and 101 to 104 (APNF). His-131 acts as the Proton donor/acceptor in catalysis. His-132 contacts (S)-2,3,4,5-tetrahydrodipicolinate. Catalysis depends on Lys-135, which acts as the Proton donor. 141 to 142 (GT) is a (S)-2,3,4,5-tetrahydrodipicolinate binding site.

Belongs to the DapB family.

It is found in the cytoplasm. It carries out the reaction (S)-2,3,4,5-tetrahydrodipicolinate + NAD(+) + H2O = (2S,4S)-4-hydroxy-2,3,4,5-tetrahydrodipicolinate + NADH + H(+). The enzyme catalyses (S)-2,3,4,5-tetrahydrodipicolinate + NADP(+) + H2O = (2S,4S)-4-hydroxy-2,3,4,5-tetrahydrodipicolinate + NADPH + H(+). It functions in the pathway amino-acid biosynthesis; L-lysine biosynthesis via DAP pathway; (S)-tetrahydrodipicolinate from L-aspartate: step 4/4. Functionally, catalyzes the conversion of 4-hydroxy-tetrahydrodipicolinate (HTPA) to tetrahydrodipicolinate. In Thermobifida fusca (strain YX), this protein is 4-hydroxy-tetrahydrodipicolinate reductase.